A 274-amino-acid polypeptide reads, in one-letter code: MHLCGGNGLLTQTDPKEQQRQLKKQKNRAAAQRSRQKHTDKADALHQQHESLEKDNLALRKEIQSLQAELAWWSRTLHVHERLCPMDCASCSAPGLLGCWDQAEGLLGPGPQGQHGCREQLELFQTPGSCYPAQPLSPGPQPHDSPSLLQCPLPSLSLGPAVVAEPPVQLSPSPLLFASHTGSSLQGSSSKLSALQPSLTAQTAPPQPLELEHPTRGKLGSSPDNPSSALGLARLQSREHKPALSAATWQGLVVDPSPHPLLAFPLLSSAQVHF.

Disordered regions lie at residues 1–47 (MHLC…ALHQ), 128–151 (GSCY…LLQC), and 187–229 (GSSS…PSSA). Residues 17–80 (EQQRQLKKQK…AWWSRTLHVH (64 aa)) form the bZIP domain. The tract at residues 20-41 (RQLKKQKNRAAAQRSRQKHTDK) is basic motif. A compositionally biased stretch (basic and acidic residues) spans 37-47 (KHTDKADALHQ). The leucine-zipper stretch occupies residues 45-66 (LHQQHESLEKDNLALRKEIQSL). Residues 187 to 196 (GSSSKLSALQ) are compositionally biased toward low complexity.

This sequence belongs to the bZIP family. As to quaternary structure, heterodimer; heterodimerizes with JUN family proteins.

Its subcellular location is the nucleus. Its function is as follows. AP-1 family transcription factor that controls the differentiation of lineage-specific cells in the immune system. Following infection, participates in the differentiation of CD8(+) thymic conventional dendritic cells in the immune system. Acts via the formation of a heterodimer with JUN family proteins that recognizes and binds DNA sequence 5'-TGA[CG]TCA-3' and regulates expression of target genes. Selectively suppresses CCN1 transcription and hence blocks the downstream cell proliferation signals produced by CCN1 and inhibits CCN1-induced anchorage-independent growth and invasion in several cancer types, such as breast cancer, malignant glioma and metastatic melanoma. Possibly acts by interfering with AP-1 binding to CCN1 promoter. In Homo sapiens (Human), this protein is Basic leucine zipper transcriptional factor ATF-like 2 (BATF2).